A 1495-amino-acid polypeptide reads, in one-letter code: ESX secretion system protein YukB (1495 aa).

Transmembrane regions (helical) follow at residues Leu-246 to Ile-266 and Gly-270 to Gln-290. 2 FtsK domains span residues Lys-661–Lys-858 and Gln-993–Tyr-1177. Residues Gly-682 to Ser-689 and Gly-1010 to Ser-1017 contribute to the ATP site.

Belongs to the EssC family.

Its subcellular location is the cell membrane. In terms of biological role, required for YukE secretion. Probable component or regulator of the ESX/ESAT-6-like secretion system (BsEss). In Bacillus subtilis (strain 168), this protein is ESX secretion system protein YukB (yukB).